The following is a 738-amino-acid chain: Glucan 1,4-alpha-glucosidase SusB (738 aa).

The first 21 residues, 1 to 21 (MKKRKILSLIAFLCISFIANA), serve as a signal peptide directing secretion. Ca(2+) is bound at residue Glu-194. Residues 215–217 (PNS), 437–439 (HHE), and 507–508 (HE) each bind substrate. Ca(2+)-binding residues include Glu-508, Glu-526, and Glu-532. The Proton donor/acceptor role is filled by Glu-532.

Belongs to the glycosyl hydrolase 97 family. Monomer. It depends on Ca(2+) as a cofactor.

The protein localises to the periplasm. The catalysed reaction is Hydrolysis of terminal (1-&gt;4)-linked alpha-D-glucose residues successively from non-reducing ends of the chains with release of beta-D-glucose.. It functions in the pathway glycan degradation; starch degradation. Glucoamylase that hydrolyzes alpha-1,4-glucosidic linkages, alpha-1,6-, alpha-1,3- and alpha-1,2-glucosidic linkages during starch degradation. The sequence is that of Glucan 1,4-alpha-glucosidase SusB (susB) from Bacteroides thetaiotaomicron (strain ATCC 29148 / DSM 2079 / JCM 5827 / CCUG 10774 / NCTC 10582 / VPI-5482 / E50).